Here is a 226-residue protein sequence, read N- to C-terminus: V-type proton ATPase subunit E (226 aa).

The protein belongs to the V-ATPase E subunit family. As to quaternary structure, V-ATPase is a heteromultimeric enzyme made up of two complexes: the ATP-hydrolytic V1 complex and the proton translocation V0 complex. The V1 complex consists of three catalytic AB heterodimers that form a heterohexamer, three peripheral stalks each consisting of EG heterodimers, one central rotor including subunits D and F, and the regulatory subunits C and H. The proton translocation complex V0 consists of the proton transport subunit a, a ring of proteolipid subunits c9c'', rotary subunit d, subunits e and f, and the accessory subunits VhaAC45 and ATP6AP2.

In terms of biological role, subunit of the V1 complex of vacuolar(H+)-ATPase (V-ATPase), a multisubunit enzyme composed of a peripheral complex (V1) that hydrolyzes ATP and a membrane integral complex (V0) that translocates protons. V-ATPase is responsible for acidifying and maintaining the pH of intracellular compartments and in some cell types, is targeted to the plasma membrane, where it is responsible for acidifying the extracellular environment. The chain is V-type proton ATPase subunit E (VHA26) from Manduca sexta (Tobacco hawkmoth).